Consider the following 539-residue polypeptide: Chitin deacetylase 1 (539 aa).

An N-terminal signal peptide occupies residues 1 to 23 (MARYARVATLAACLLFACALADG). Positions 42–104 (QELCKDKDAG…WKDAVKNCKL (63 aa)) constitute a Chitin-binding type-2 domain. 6 disulfides stabilise this stretch: C80/C93, C122/C134, C129/C147, C141/C156, C168/C180, and C173/C178. Residues 121–157 (LCQDGFLACGDSTCIERGLFCNGEKDCGDGSDENSCD) enclose the LDL-receptor class A domain. Zn(2+) is bound at residue D206. 5 cysteine pairs are disulfide-bonded: C230-C489, C354-C361, C391-C397, C497-C520, and C503-C523. N244 is a glycosylation site (N-linked (GlcNAc...) asparagine). Residues H261 and H265 each coordinate Zn(2+). An N-linked (GlcNAc...) asparagine glycan is attached at N296.

Belongs to the carbohydrate esterase 4 (CE4) family. As to quaternary structure, interacts with CPAP3-A1. It depends on Zn(2+) as a cofactor. As to expression, highly expressed in epidermis and head. Moderate expression levels in fat body, Malpighian tubule, testis and midgut. Low expression in silk gland and ovary.

It localises to the secreted. The enzyme catalyses [(1-&gt;4)-N-acetyl-beta-D-glucosaminyl](n) + n H2O = chitosan + n acetate. Its activity is regulated as follows. Binding to the accessory protein CPAP3-A1 is essential for chitinase activity. Functionally, hydrolyzes the N-acetamido groups of N-acetyl-D-glucosamine residues in chitin. The protein is Chitin deacetylase 1 of Bombyx mori (Silk moth).